We begin with the raw amino-acid sequence, 347 residues long: Bombesin receptor-activated protein C6orf89 (347 aa).

The Cytoplasmic segment spans residues 1–58 (MDLAANEISIYDKLSETVDLVRQTGHQCGMSEKAIEKFIRQLLEKNEPQRPPPQYPLL). Residues 59–79 (IVVYKVLATLGLILLTAYFVI) traverse the membrane as a helical segment. Over 80–347 (QPFSPLAPEP…ICDGTAFSEL (268 aa)) the chain is Extracellular.

As to quaternary structure, homodimer. Interacts with BRS3. Interacts (via N-terminus) with SIN3B. Post-translationally, glycosylated.

It is found in the golgi apparatus membrane. The protein localises to the midbody. It localises to the cytoplasm. The protein resides in the nucleus. Its subcellular location is the nucleolus. Exhibits histone deacetylase (HDAC) enhancer properties. May play a role in cell cycle progression and wound repair of bronchial epithelial cells. In Homo sapiens (Human), this protein is Bombesin receptor-activated protein C6orf89 (C6orf89).